The primary structure comprises 233 residues: Protein-methionine-sulfoxide reductase heme-binding subunit MsrQ (233 aa).

6 consecutive transmembrane segments (helical) span residues 13-33 (IKAA…HGLW), 44-64 (ALTR…LCVS), 81-101 (MLGL…LWLD), 117-137 (PFIT…LTSS), 151-171 (SLHR…LWLV), and 174-194 (VALL…GWRV). The Ferric oxidoreductase domain occupies 50–164 (GIWTLNFLFL…AVYAVAILGV (115 aa)).

The protein belongs to the MsrQ family. Heterodimer of a catalytic subunit (MsrP) and a heme-binding subunit (MsrQ).

Its subcellular location is the cell inner membrane. Functionally, part of the MsrPQ system that repairs oxidized periplasmic proteins containing methionine sulfoxide residues (Met-O), using respiratory chain electrons. Thus protects these proteins from oxidative-stress damage caused by reactive species of oxygen and chlorine generated by the host defense mechanisms. MsrPQ is essential for the maintenance of envelope integrity under bleach stress, rescuing a wide series of structurally unrelated periplasmic proteins from methionine oxidation. MsrQ provides electrons for reduction to the reductase catalytic subunit MsrP, using the quinone pool of the respiratory chain. Probably involved in protection against reactive chlorine species (RCS) generated by chlorite and hypochlorite. The polypeptide is Protein-methionine-sulfoxide reductase heme-binding subunit MsrQ (Azospira oryzae (strain ATCC BAA-33 / DSM 13638 / PS) (Dechlorosoma suillum)).